The chain runs to 550 residues: Rab GTPase-activating protein 22 (550 aa).

The disordered stretch occupies residues 1–49 (MKALRRSYTSTSSGNSSSSSSLPSSSSSSLPSSSSSSPPSSNSNSYSNS). The segment covering 7–49 (SYTSTSSGNSSSSSSLPSSSSSSLPSSSSSSPPSSNSNSYSNS) has biased composition (low complexity). One can recognise a Rab-GAP TBC domain in the interval 126–460 (GVDPSIRAEV…CLWEVMWADQ (335 aa)).

As to quaternary structure, interacts with AGT1 in peroxisome under biotic stress conditions. In terms of tissue distribution, expressed in root meristems, vascular tissues, guard cells, trichomes, styles and receptacles.

The protein localises to the nucleus. The protein resides in the peroxisome. In terms of biological role, involved in defense response against fungal and bacterial pathogens. Acts as a negative regulator of jasmonate (JA) responses during infection by the soil-born fungal pathogen Verticillium longisporum. Involved in abscisic acid-dependent stomata closure in response to infection by V.longisporum and Pseudomonas syringae. May be a downstream component of brassinosteroid-mediated signaling. This chain is Rab GTPase-activating protein 22, found in Arabidopsis thaliana (Mouse-ear cress).